We begin with the raw amino-acid sequence, 141 residues long: Nucleoside diphosphate kinase (141 aa).

Lys-9, Phe-57, Arg-85, Thr-91, Arg-102, and Asn-112 together coordinate ATP. His-115 acts as the Pros-phosphohistidine intermediate in catalysis.

It belongs to the NDK family. In terms of assembly, homotetramer. It depends on Mg(2+) as a cofactor.

It is found in the cytoplasm. It catalyses the reaction a 2'-deoxyribonucleoside 5'-diphosphate + ATP = a 2'-deoxyribonucleoside 5'-triphosphate + ADP. The enzyme catalyses a ribonucleoside 5'-diphosphate + ATP = a ribonucleoside 5'-triphosphate + ADP. In terms of biological role, major role in the synthesis of nucleoside triphosphates other than ATP. The ATP gamma phosphate is transferred to the NDP beta phosphate via a ping-pong mechanism, using a phosphorylated active-site intermediate. This is Nucleoside diphosphate kinase from Chlamydia caviae (strain ATCC VR-813 / DSM 19441 / 03DC25 / GPIC) (Chlamydophila caviae).